The chain runs to 234 residues: tRNA (guanine-N(1)-)-methyltransferase (234 aa).

S-adenosyl-L-methionine is bound at residue glycine 113.

The protein belongs to the RNA methyltransferase TrmD family. Homodimer.

The protein resides in the cytoplasm. The catalysed reaction is guanosine(37) in tRNA + S-adenosyl-L-methionine = N(1)-methylguanosine(37) in tRNA + S-adenosyl-L-homocysteine + H(+). In terms of biological role, specifically methylates guanosine-37 in various tRNAs. This chain is tRNA (guanine-N(1)-)-methyltransferase, found in Gluconobacter oxydans (strain 621H) (Gluconobacter suboxydans).